Consider the following 472-residue polypeptide: NADH-quinone oxidoreductase subunit N 2 (472 aa).

Transmembrane regions (helical) follow at residues 3–23, 34–54, 67–87, 106–126, 156–176, 198–218, 233–253, 263–283, 291–311, 317–337, 360–380, 398–418, and 441–461; these read WMSF…LLLS, HVAA…SVGA, LFSQ…VTLC, FVCT…VVFI, FLVG…LYGA, VVIG…VFPF, VSAY…VRVI, LVHV…LAAI, LLAY…LSMN, AAVF…LVLV, ILAL…PTVG, TLVL…LLVI, and LLSG…NQII.

The protein belongs to the complex I subunit 2 family. In terms of assembly, NDH-1 is composed of 14 different subunits. Subunits NuoA, H, J, K, L, M, N constitute the membrane sector of the complex.

It is found in the cell inner membrane. It catalyses the reaction a quinone + NADH + 5 H(+)(in) = a quinol + NAD(+) + 4 H(+)(out). NDH-1 shuttles electrons from NADH, via FMN and iron-sulfur (Fe-S) centers, to quinones in the respiratory chain. The immediate electron acceptor for the enzyme in this species is believed to be ubiquinone. Couples the redox reaction to proton translocation (for every two electrons transferred, four hydrogen ions are translocated across the cytoplasmic membrane), and thus conserves the redox energy in a proton gradient. The sequence is that of NADH-quinone oxidoreductase subunit N 2 from Syntrophobacter fumaroxidans (strain DSM 10017 / MPOB).